Reading from the N-terminus, the 246-residue chain is Bidirectional sugar transporter SWEET3a (246 aa).

Residues 1–6 (MFPDIR) are Extracellular-facing. A helical membrane pass occupies residues 7–27 (FIVGIIGSVACMLLYSAPILT). A MtN3/slv 1 domain is found at 7 to 96 (FIVGIIGSVA…ISIYVWFAPR (90 aa)). The Cytoplasmic segment spans residues 28–42 (FKRVIKKASVEEFSC). The chain crosses the membrane as a helical span at residues 43-63 (IPYILALFSCLTYSWYGFPVV). Topologically, residues 64-74 (SYGWENMTVCS) are extracellular. Residue N69 is glycosylated (N-linked (GlcNAc...) asparagine). The chain crosses the membrane as a helical span at residues 75–95 (ISSLGVLFEGTFISIYVWFAP). Residues 96–101 (RGKKKQ) lie on the Cytoplasmic side of the membrane. The helical transmembrane segment at 102-122 (VMLMASLILAVFCMTVFFSSF) threads the bilayer. Over 123-131 (SIHNHHIRK) the chain is Extracellular. The chain crosses the membrane as a helical span at residues 132-152 (VFVGSVGLVSSISMYGSPLVA). The 85-residue stretch at 133–217 (FVGSVGLVSS…VVYCIYSKCK (85 aa)) folds into the MtN3/slv 2 domain. Residues 153–166 (MKQVIRTKSVEFMP) are Cytoplasmic-facing. Residues 167-187 (FYLSLFTLFTSLTWMAYGVIG) form a helical membrane-spanning segment. Residues 188-191 (RDPF) are Extracellular-facing. A helical membrane pass occupies residues 192-212 (IATPNCIGSIMGILQLVVYCI). The Cytoplasmic segment spans residues 213 to 246 (YSKCKEAPKVLHDIEQANVVKIPTSHVDTKGHNP).

The protein belongs to the SWEET sugar transporter family. In terms of assembly, forms homooligomers and/or heterooligomers.

The protein resides in the cell membrane. Mediates both low-affinity uptake and efflux of sugar across the plasma membrane. The protein is Bidirectional sugar transporter SWEET3a (SWEET3A) of Oryza sativa subsp. japonica (Rice).